Here is a 491-residue protein sequence, read N- to C-terminus: Glutamate--tRNA ligase (491 aa).

A 'HIGH' region motif is present at residues 12–22; that stretch reads PSPTGTPHVGL. The tract at residues 111 to 134 is disordered; the sequence is STPEEVEERHKAAGRDPKLGYDNF. Residues 117–134 are compositionally biased toward basic and acidic residues; the sequence is EERHKAAGRDPKLGYDNF. Positions 256–260 match the 'KMSKS' region motif; the sequence is KLSKR. Lys-259 lines the ATP pocket.

Belongs to the class-I aminoacyl-tRNA synthetase family. Glutamate--tRNA ligase type 1 subfamily. As to quaternary structure, monomer.

It localises to the cytoplasm. It catalyses the reaction tRNA(Glu) + L-glutamate + ATP = L-glutamyl-tRNA(Glu) + AMP + diphosphate. Catalyzes the attachment of glutamate to tRNA(Glu) in a two-step reaction: glutamate is first activated by ATP to form Glu-AMP and then transferred to the acceptor end of tRNA(Glu). This is Glutamate--tRNA ligase from Rhodococcus jostii (strain RHA1).